Reading from the N-terminus, the 150-residue chain is S-protein homolog 3 (150 aa).

The signal sequence occupies residues 1-23 (MKNILKTQVHVVVIYLLIKIAFS). N32 and N70 each carry an N-linked (GlcNAc...) asparagine glycan.

Belongs to the plant self-incompatibility (S1) protein family.

It localises to the secreted. In Arabidopsis thaliana (Mouse-ear cress), this protein is S-protein homolog 3.